Reading from the N-terminus, the 490-residue chain is Cytochrome P450 2C19 (490 aa).

A heme-binding site is contributed by C435.

The protein belongs to the cytochrome P450 family. It depends on heme as a cofactor.

It is found in the endoplasmic reticulum membrane. It localises to the microsome membrane. It catalyses the reaction an organic molecule + reduced [NADPH--hemoprotein reductase] + O2 = an alcohol + oxidized [NADPH--hemoprotein reductase] + H2O + H(+). The catalysed reaction is (5Z,8Z,11Z)-eicosatrienoate + reduced [NADPH--hemoprotein reductase] + O2 = 19-hydroxy-(5Z,8Z,11Z)-eicosatrienoate + oxidized [NADPH--hemoprotein reductase] + H2O + H(+). The enzyme catalyses (5Z,8Z,11Z,14Z)-eicosatetraenoate + reduced [NADPH--hemoprotein reductase] + O2 = 19-hydroxy-(5Z,8Z,11Z,14Z)-eicosatetraenoate + oxidized [NADPH--hemoprotein reductase] + H2O + H(+). It carries out the reaction (5Z,8Z,11Z,14Z,17Z)-eicosapentaenoate + reduced [NADPH--hemoprotein reductase] + O2 = 19-hydroxy-(5Z,8Z,11Z,14Z,17Z)-eicosapentaenoate + oxidized [NADPH--hemoprotein reductase] + H2O + H(+). It catalyses the reaction (4Z,7Z,10Z,13Z,16Z,19Z)-docosahexaenoate + reduced [NADPH--hemoprotein reductase] + O2 = 21-hydroxy-(4Z,7Z,10Z,13Z,16Z,19Z)-docosahexaenoate + oxidized [NADPH--hemoprotein reductase] + H2O + H(+). The catalysed reaction is (5Z,8Z,11Z,14Z)-eicosatetraenoate + reduced [NADPH--hemoprotein reductase] + O2 = (8R,9S)-epoxy-(5Z,11Z,14Z)-eicosatrienoate + oxidized [NADPH--hemoprotein reductase] + H2O + H(+). The enzyme catalyses (5Z,8Z,11Z,14Z)-eicosatetraenoate + reduced [NADPH--hemoprotein reductase] + O2 = (11R,12S)-epoxy-(5Z,8Z,14Z)-eicosatrienoate + oxidized [NADPH--hemoprotein reductase] + H2O + H(+). It carries out the reaction (5Z,8Z,11Z,14Z)-eicosatetraenoate + reduced [NADPH--hemoprotein reductase] + O2 = (11S,12R)-epoxy-(5Z,8Z,14Z)-eicosatrienoate + oxidized [NADPH--hemoprotein reductase] + H2O + H(+). It catalyses the reaction (5Z,8Z,11Z,14Z)-eicosatetraenoate + reduced [NADPH--hemoprotein reductase] + O2 = (14R,15S)-epoxy-(5Z,8Z,11Z)-eicosatrienoate + oxidized [NADPH--hemoprotein reductase] + H2O + H(+). The catalysed reaction is (5Z,8Z,11Z,14Z,17Z)-eicosapentaenoate + reduced [NADPH--hemoprotein reductase] + O2 = (17R,18S)-epoxy-(5Z,8Z,11Z,14Z)-eicosatetraenoate + oxidized [NADPH--hemoprotein reductase] + H2O + H(+). The enzyme catalyses (4Z,7Z,10Z,13Z,16Z,19Z)-docosahexaenoate + reduced [NADPH--hemoprotein reductase] + O2 = (19R,20S)-epoxy-(4Z,7Z,10Z,13Z,16Z)-docosapentaenoate + oxidized [NADPH--hemoprotein reductase] + H2O + H(+). It carries out the reaction (4Z,7Z,10Z,13Z,16Z,19Z)-docosahexaenoate + reduced [NADPH--hemoprotein reductase] + O2 = (19S,20R)-epoxy-(4Z,7Z,10Z,13Z,16Z)-docosapentaenoate + oxidized [NADPH--hemoprotein reductase] + H2O + H(+). It catalyses the reaction (4R)-limonene + reduced [NADPH--hemoprotein reductase] + O2 = (1R,5S)-carveol + oxidized [NADPH--hemoprotein reductase] + H2O + H(+). The catalysed reaction is (4S)-limonene + reduced [NADPH--hemoprotein reductase] + O2 = (1S,5R)-carveol + oxidized [NADPH--hemoprotein reductase] + H2O + H(+). The enzyme catalyses (4S)-limonene + reduced [NADPH--hemoprotein reductase] + O2 = (4S)-perillyl alcohol + oxidized [NADPH--hemoprotein reductase] + H2O + H(+). It carries out the reaction fenbendazole + reduced [NADPH--hemoprotein reductase] + O2 = 4'-hydroxyfenbendazole + oxidized [NADPH--hemoprotein reductase] + H2O + H(+). It participates in lipid metabolism; fatty acid metabolism. The protein operates within terpene metabolism; (4R)-limonene degradation. Functionally, a cytochrome P450 monooxygenase involved in the metabolism of polyunsaturated fatty acids (PUFA). Mechanistically, uses molecular oxygen inserting one oxygen atom into a substrate, and reducing the second into a water molecule, with two electrons provided by NADPH via cytochrome P450 reductase (NADPH--hemoprotein reductase). Catalyzes the hydroxylation of carbon-hydrogen bonds. Hydroxylates PUFA specifically at the omega-1 position. Catalyzes the epoxidation of double bonds of PUFA. Also metabolizes plant monoterpenes such as limonene. Oxygenates (R)- and (S)-limonene to produce carveol and perillyl alcohol. Responsible for the metabolism of a number of therapeutic agents such as the anticonvulsant drug S-mephenytoin, omeprazole, proguanil, certain barbiturates, diazepam, propranolol, citalopram and imipramine. Hydroxylates fenbendazole at the 4' position. The protein is Cytochrome P450 2C19 (CYP2C19) of Homo sapiens (Human).